We begin with the raw amino-acid sequence, 323 residues long: Phospho-N-acetylmuramoyl-pentapeptide-transferase (323 aa).

Transmembrane regions (helical) follow at residues 12 to 32, 58 to 78, 84 to 104, 120 to 140, 151 to 171, 177 to 197, 200 to 220, 229 to 250, and 303 to 323; these read IVMA…IIIP, PTIG…IMVG, AMIA…DDLL, MILL…YIGT, INFG…VTNA, GLDG…GIIS, LGHI…LAFL, VFMG…ALIL, and KIVS…FASL.

It belongs to the glycosyltransferase 4 family. MraY subfamily. It depends on Mg(2+) as a cofactor.

The protein localises to the cell membrane. The enzyme catalyses UDP-N-acetyl-alpha-D-muramoyl-L-alanyl-gamma-D-glutamyl-meso-2,6-diaminopimeloyl-D-alanyl-D-alanine + di-trans,octa-cis-undecaprenyl phosphate = di-trans,octa-cis-undecaprenyl diphospho-N-acetyl-alpha-D-muramoyl-L-alanyl-D-glutamyl-meso-2,6-diaminopimeloyl-D-alanyl-D-alanine + UMP. Its pathway is cell wall biogenesis; peptidoglycan biosynthesis. Catalyzes the initial step of the lipid cycle reactions in the biosynthesis of the cell wall peptidoglycan: transfers peptidoglycan precursor phospho-MurNAc-pentapeptide from UDP-MurNAc-pentapeptide onto the lipid carrier undecaprenyl phosphate, yielding undecaprenyl-pyrophosphoryl-MurNAc-pentapeptide, known as lipid I. The protein is Phospho-N-acetylmuramoyl-pentapeptide-transferase of Clostridium perfringens (strain ATCC 13124 / DSM 756 / JCM 1290 / NCIMB 6125 / NCTC 8237 / Type A).